Here is a 117-residue protein sequence, read N- to C-terminus: Snaclec CHH-B subunit beta (117 aa).

3 cysteine pairs are disulfide-bonded: C2–C13, C30–C115, and C92–C107. The C-type lectin domain maps to 9–116; that stretch reads YEGHCYRVFQ…CSKTHNVVCK (108 aa).

It belongs to the snaclec family. As to quaternary structure, heterodimer of subunits alpha and beta; disulfide-linked. As to expression, expressed by the venom gland.

It is found in the secreted. Binds to the subunit GPIbalpha (GP1BA) of the platelet GPIb/V/IX receptor system. It inhibits ristocetin- and vWF-induced platelet aggregation in platelet-rich plasma by inhibiting the binding of vWF to GPIbalpha. This is Snaclec CHH-B subunit beta from Crotalus horridus (Timber rattlesnake).